Consider the following 275-residue polypeptide: 4-diphosphocytidyl-2-C-methyl-D-erythritol kinase (275 aa).

Residue Lys14 is part of the active site. Residue Pro98–Ser108 coordinates ATP. Residue Asp140 is part of the active site.

This sequence belongs to the GHMP kinase family. IspE subfamily.

It catalyses the reaction 4-CDP-2-C-methyl-D-erythritol + ATP = 4-CDP-2-C-methyl-D-erythritol 2-phosphate + ADP + H(+). Its pathway is isoprenoid biosynthesis; isopentenyl diphosphate biosynthesis via DXP pathway; isopentenyl diphosphate from 1-deoxy-D-xylulose 5-phosphate: step 3/6. In terms of biological role, catalyzes the phosphorylation of the position 2 hydroxy group of 4-diphosphocytidyl-2C-methyl-D-erythritol. The polypeptide is 4-diphosphocytidyl-2-C-methyl-D-erythritol kinase (Francisella tularensis subsp. tularensis (strain FSC 198)).